A 219-amino-acid polypeptide reads, in one-letter code: Protein ERP1 (219 aa).

A signal peptide spans 1 to 22 (MLLTSLLQVFACCLVLPAQVTA). At 23–186 (FYYYTSGAER…RDASEAVNSR (164 aa)) the chain is on the lumenal side. Positions 32 to 131 (RKCFHKELSK…KTKIDVEFQV (100 aa)) constitute a GOLD domain. The chain crosses the membrane as a helical span at residues 187–207 (AMWWIVIQLIVLAVTCGWQMK). Topologically, residues 208 to 219 (HLGKFFVKQKIL) are cytoplasmic.

It belongs to the EMP24/GP25L family. Associates with EMP24, ERV25 and ERP2.

It localises to the endoplasmic reticulum membrane. Involved in vesicular protein trafficking. The chain is Protein ERP1 (ERP1) from Saccharomyces cerevisiae (strain ATCC 204508 / S288c) (Baker's yeast).